The chain runs to 153 residues: SsrA-binding protein (153 aa).

It belongs to the SmpB family.

It is found in the cytoplasm. Required for rescue of stalled ribosomes mediated by trans-translation. Binds to transfer-messenger RNA (tmRNA), required for stable association of tmRNA with ribosomes. tmRNA and SmpB together mimic tRNA shape, replacing the anticodon stem-loop with SmpB. tmRNA is encoded by the ssrA gene; the 2 termini fold to resemble tRNA(Ala) and it encodes a 'tag peptide', a short internal open reading frame. During trans-translation Ala-aminoacylated tmRNA acts like a tRNA, entering the A-site of stalled ribosomes, displacing the stalled mRNA. The ribosome then switches to translate the ORF on the tmRNA; the nascent peptide is terminated with the 'tag peptide' encoded by the tmRNA and targeted for degradation. The ribosome is freed to recommence translation, which seems to be the essential function of trans-translation. The chain is SsrA-binding protein from Lactobacillus delbrueckii subsp. bulgaricus (strain ATCC 11842 / DSM 20081 / BCRC 10696 / JCM 1002 / NBRC 13953 / NCIMB 11778 / NCTC 12712 / WDCM 00102 / Lb 14).